Reading from the N-terminus, the 581-residue chain is uncharacterized protein (581 aa).

The signal sequence occupies residues 1–28 (MDSKAVSPLIGFVLMLAIIMGLIGIMQA).

This is an uncharacterized protein from Archaeoglobus fulgidus (strain ATCC 49558 / DSM 4304 / JCM 9628 / NBRC 100126 / VC-16).